Reading from the N-terminus, the 1080-residue chain is MSVKASGGSSVARPQLYQTLAVATITQAEQQDRFLGTGELNELATYFASGAKRLEIAQTLTENSEIIVSRAANRIFVGGSPMSFLEKPREAELAMATVAPGNVQEGMKLGTVTYVESRGGFLENLRSIFNSSPSGPTPPGFRPINVARYGPSNMAKSLRDLSWFLRYATYAIVAGDPNIIAVNTRGLREIIENACSGEPTIVALQEIKAASLSFFRQDAKATEIVSQYMDVLLTEFKAATPSNKLRQRPSGDQQGLQLPQIYFEAAERRPKFVMKPGLSASEKNEVIRAAYRQIFERDITRAYSLSVSDLESKVKNGDISMKEFVRRLAKSPLYQKQFYQPFINSRVIELAFRHILGRGPSSREEVQKYFSIISNGGLPALVDALVDSPEYSDYFGEETVPYLRGLGQEAQECRNWGPQQDLFNYSAPFRKVPQFITTFACLYDRPLPDQHPYGSGNDPLEIQFGAIFPKETRNPNTSPAPFSKDTRRILINQGPGINSQVSNPGARGEFPGSLGPKVFRLDQLPGTIGKKAAKGASIKFSESSTQAVIKAAYLQVFGRDVYEGQRLKVQEIKLENGQLSVREFIRALAKSDVFRKTYWTSLYVCKAIEYIHRRLLGRPTYGRQEINKYFDIAAKQGFYAVVDAIINSVEYSEAFGEDTVPYERYLTPSGVALRQLRVGSIREDVGGKVQKQETPLFVTLGTVTDTRTEPDIQFRINQGVSKQREQTKVFKQVANISDKAAVQTLISAAYRQIFERDVAPYIAKNEFSALESKLSNGEITVKEFIEGLGYSNLYIKEFYTPYPNTKVIELGTKHFLGRAPLDQVEIRKYNQILATQGIRAFIGALVSSAEYAEVFGEDTVPYRRYPTLPAANFPNTEKLYNQLTKQNDDLVVPSFKTVQPRLTLAGTSSSGRNGFTDLGRSSTSAQGQLGETANRCKPARIYRLSGTNQAETQLVINAIYSQVLDLFSSDIPANYRLNALEGKLQTGEISVREFVRELASSDIYCDRFYTPYPSAKVIEFLYRHLLGRAPATQEEISEYNKLMASRGLRAVVEAIVDSQEYARYFGEDVVPYPRSSSLGN.

Residues 18 to 76 (QTLAVATITQAEQQDRFLGTGELNELATYFASGAKRLEIAQTLTENSEIIVSRAANRIF) are phycobilin-like 1. Positions 77-144 (VGGSPMSFLE…GPTPPGFRPI (68 aa)) are phycobilin-like loop. A phycobilin-like 2 region spans residues 145–237 (NVARYGPSNM…YMDVLLTEFK (93 aa)). Cysteine 195 provides a ligand contact to (2R,3E)-phycocyanobilin. 4 consecutive PBS-linker domains span residues 252-432 (DQQG…FRKV), 514-693 (LGPK…QKQE), 710-888 (PDIQ…KQND), and 922-1080 (STSA…SLGN). The tract at residues 906–930 (GTSSSGRNGFTDLGRSSTSAQGQLG) is disordered.

Belongs to the phycobilisome linker protein family. Phycobilisomes of this organism are composed of a two cylinder core, from which six rods radiate. The core is mainly composed of allophycocyanin alpha and beta chains, and of three minor components: the allophycocyanin alpha-B chain, a 18.3 kDa polypeptide, and the anchor polypeptide L-CM. Post-translationally, contains one covalently linked bilin chromophore. This protein autochromophorylates.

Its subcellular location is the cellular thylakoid membrane. This protein is postulated to act both as terminal energy acceptor (by its phycobilin-like domains) and as a linker polypeptide (by its repeats and arms) that stabilizes the phycobilisome core architecture. Its function is as follows. Has intrinsic bilin lyase activity. The polypeptide is Phycobiliprotein ApcE (apcE) (Microchaete diplosiphon (Fremyella diplosiphon)).